The primary structure comprises 245 residues: Biosynthetic peptidoglycan transglycosylase (245 aa).

Residues 10 to 30 (FLALLFVVATLAQLWYLGQVL) form a helical membrane-spanning segment. The tract at residues 224–245 (DPGTVPLPPPPEPTAPPEGNTQ) is disordered. Pro residues predominate over residues 226-239 (GTVPLPPPPEPTAP).

This sequence belongs to the glycosyltransferase 51 family.

Its subcellular location is the cell inner membrane. The catalysed reaction is [GlcNAc-(1-&gt;4)-Mur2Ac(oyl-L-Ala-gamma-D-Glu-L-Lys-D-Ala-D-Ala)](n)-di-trans,octa-cis-undecaprenyl diphosphate + beta-D-GlcNAc-(1-&gt;4)-Mur2Ac(oyl-L-Ala-gamma-D-Glu-L-Lys-D-Ala-D-Ala)-di-trans,octa-cis-undecaprenyl diphosphate = [GlcNAc-(1-&gt;4)-Mur2Ac(oyl-L-Ala-gamma-D-Glu-L-Lys-D-Ala-D-Ala)](n+1)-di-trans,octa-cis-undecaprenyl diphosphate + di-trans,octa-cis-undecaprenyl diphosphate + H(+). Its pathway is cell wall biogenesis; peptidoglycan biosynthesis. In terms of biological role, peptidoglycan polymerase that catalyzes glycan chain elongation from lipid-linked precursors. This Alcanivorax borkumensis (strain ATCC 700651 / DSM 11573 / NCIMB 13689 / SK2) protein is Biosynthetic peptidoglycan transglycosylase.